Reading from the N-terminus, the 364-residue chain is Ferrochelatase (364 aa).

Positions 211 and 292 each coordinate Fe cation.

It belongs to the ferrochelatase family.

The protein localises to the cytoplasm. The enzyme catalyses heme b + 2 H(+) = protoporphyrin IX + Fe(2+). The protein operates within porphyrin-containing compound metabolism; protoheme biosynthesis; protoheme from protoporphyrin-IX: step 1/1. Functionally, catalyzes the ferrous insertion into protoporphyrin IX. This chain is Ferrochelatase, found in Nitrosomonas europaea (strain ATCC 19718 / CIP 103999 / KCTC 2705 / NBRC 14298).